Reading from the N-terminus, the 151-residue chain is MGRLHSKGKGISSSALPYRRTAPSWLKISSQDVDETICKFAKKGLTPSQIGVILRDSHGIAQVKSVTGSKILRILKAHGLAPEIPEDLYHLIKKAVSIRKHLERFRKDKDSKFRLILVESRIHRLARYYKKTKKLPPVWKYESTTASTLVA.

The protein belongs to the universal ribosomal protein uS15 family.

In Pisum sativum (Garden pea), this protein is Small ribosomal subunit protein uS15 (RPS13).